The sequence spans 417 residues: MNFSEQFTGRSEPGRKANRTSNNNTNSTTNVATVTTDDSNRPACDRCKGQKLRCIWENGSNTCRRCTRARAVCQQPRPRPFGRPRCSTKSKHHVAQNQANTKIWVSSTTQQPQENDAEMPMATSDDHDPTSFLSSTAVDLPRYLGLASFPTDPSLQIAISPPHGVHGNSFNLETGLLGNFSDAQFKNPATFYQPQGFINAANPATPAPVPVPASAPVSADGASLFEFDPDDISGDSEHSHCHWLKQLGDLNVAIYQHPLHPKPAGVSTPGVSTGFSAEQVSLSSLQIGRLLHMTSRLGRLTEEIDSADHVQPKNDGSAESDSFGGIKLAINDRSTLFVVLSCYVRLEETFAQALATVVEIRRRGPLSDDTYQLMPRLTVDGWSLECCQTMQIDFVIYICEQTLVRIRRSITSLHADM.

Positions 1-40 (MNFSEQFTGRSEPGRKANRTSNNNTNSTTNVATVTTDDSN) are disordered. The span at 19-37 (RTSNNNTNSTTNVATVTTD) shows a compositional bias: low complexity. Positions 44-73 (CDRCKGQKLRCIWENGSNTCRRCTRARAVC) form a DNA-binding region, zn(2)-C6 fungal-type. Disordered stretches follow at residues 75-94 (QPRP…KHHV) and 104-128 (WVSS…DDHD). A compositionally biased stretch (basic residues) spans 80 to 94 (PFGRPRCSTKSKHHV). Polar residues predominate over residues 104 to 114 (WVSSTTQQPQE).

It localises to the nucleus. In terms of biological role, C6 finger transcription factor; part of the tra gene cluster that produces terrestric acid. The clavatol biosynthesis cluster cla and the terrestric acid cluster tra are both involved in the production of peniphenones and penilactones. This is C6 finger transcription factor traC from Penicillium crustosum (Blue mold fungus).